The sequence spans 38 residues: Photosystem II reaction center protein X 1 (38 aa).

The helical transmembrane segment at 8–28 (FLWSLLYGAVVLGLLFGAIVF) threads the bilayer.

It belongs to the PsbX family. Type 1 subfamily. As to quaternary structure, PSII is composed of 1 copy each of membrane proteins PsbA, PsbB, PsbC, PsbD, PsbE, PsbF, PsbH, PsbI, PsbJ, PsbK, PsbL, PsbM, PsbT, PsbX, PsbY, PsbZ, Psb30/Ycf12, peripheral proteins PsbO, CyanoQ (PsbQ), PsbU, PsbV and a large number of cofactors. It forms dimeric complexes.

It localises to the cellular thylakoid membrane. Involved in the binding and/or turnover of quinones at the Q(B) site of photosystem II (PSII). PSII is a light-driven water plastoquinone oxidoreductase, using light energy to abstract electrons from H(2)O, generating a proton gradient subsequently used for ATP formation. The polypeptide is Photosystem II reaction center protein X 1 (Synechococcus sp. (strain JA-3-3Ab) (Cyanobacteria bacterium Yellowstone A-Prime)).